The chain runs to 502 residues: Hippocampus abundant transcript-like protein 1 (502 aa).

Basic and acidic residues predominate over residues 1–12; that stretch reads MNAEPPEEKAAS. The interval 1–27 is disordered; it reads MNAEPPEEKAASEAEAGAMPEKRAGSR. The Extracellular portion of the chain corresponds to 1-46; the sequence is MNAEPPEEKAASEAEAGAMPEKRAGSRAAGGNSLQGFGRPSVYHAA. A helical membrane pass occupies residues 47–67; it reads IVIFLEFFAWGLLTTSMLTVL. Topologically, residues 68–79 are cytoplasmic; that stretch reads HETFPQHTFLMN. The chain crosses the membrane as a helical span at residues 80–100; that stretch reads GLIQGVKGLLSFLSAPLIGAL. Residues 101-108 lie on the Extracellular side of the membrane; that stretch reads SDVWGRKP. A helical transmembrane segment spans residues 109–129; that stretch reads FLLGTVFFTCFPIPLMRISPW. At 130–131 the chain is on the cytoplasmic side; the sequence is WY. The chain crosses the membrane as a helical span at residues 132–152; that stretch reads FAMISISGVFSVTFSVIFAYV. Residues 153-165 lie on the Extracellular side of the membrane; it reads ADVTQEHERSTAY. A helical transmembrane segment spans residues 166-186; sequence GWVSATFAASLVSSPAIGAYL. Residues 187–193 lie on the Cytoplasmic side of the membrane; sequence SASYGDS. A helical transmembrane segment spans residues 194–214; the sequence is LVVLVATVVALLDICFILLAV. The Extracellular segment spans residues 215 to 248; that stretch reads PESLPEKMRPLSWGARISWKQADPFASLKKVGKD. Residues 249–269 traverse the membrane as a helical segment; sequence STILLICITVFLSYLPEAGQY. The Cytoplasmic segment spans residues 270–278; it reads SSFFLYLRQ. Residues 279–299 form a helical membrane-spanning segment; sequence VIGFGSIKIAAFIAMVGILSI. Over 300–316 the chain is Extracellular; that stretch reads VAQTVFLTSLMRSLGNK. A helical transmembrane segment spans residues 317–337; that stretch reads NTVLLGLGFQMFQLAWYGFGS. Residue Gln-338 is a topological domain, cytoplasmic. A helical transmembrane segment spans residues 339–359; it reads AWMMWAAGIVAAVSSITFPAV. At 360 to 384 the chain is on the extracellular side; that stretch reads STLVSQNADSNQQGVAQGIITGIRG. The chain crosses the membrane as a helical span at residues 385–405; it reads LCNGLGPALYGFIFYMFHVEL. Residues 406–425 are Cytoplasmic-facing; it reads TELEPELISNNAALQGAVIP. Residues 426–446 traverse the membrane as a helical segment; that stretch reads GPPFLFGACIVFMSFLVAVFI. Topologically, residues 447–502 are extracellular; sequence PEYSKGGIQKHSNSISGSLANTPERGSDEDIEPLLQDSSIWELSSLEEPGHQCTEL.

Belongs to the major facilitator superfamily.

It localises to the membrane. In Bos taurus (Bovine), this protein is Hippocampus abundant transcript-like protein 1.